The sequence spans 409 residues: Protein a6 (409 aa).

Ser-86 is subject to Phosphoserine. The segment covering 106-120 has biased composition (basic residues); it reads RAHRTGRRQAPRRAA. The tract at residues 106–165 is disordered; sequence RAHRTGRRQAPRRAATHSYPVTDSILITSDDEHNEQEPSSTARVRSQLSMRSPPPLAPLT. Residue Thr-133 is modified to Phosphothreonine. Ser-134 is modified (phosphoserine). Positions 142 to 155 are enriched in polar residues; the sequence is EPSSTARVRSQLSM.

The sequence is that of Protein a6 (a6) from Drosophila melanogaster (Fruit fly).